Here is a 131-residue protein sequence, read N- to C-terminus: Small ribosomal subunit protein uS11 (131 aa).

It belongs to the universal ribosomal protein uS11 family. Part of the 30S ribosomal subunit. Interacts with proteins S7 and S18. Binds to IF-3.

In terms of biological role, located on the platform of the 30S subunit, it bridges several disparate RNA helices of the 16S rRNA. Forms part of the Shine-Dalgarno cleft in the 70S ribosome. The protein is Small ribosomal subunit protein uS11 of Helicobacter pylori (strain ATCC 700392 / 26695) (Campylobacter pylori).